The chain runs to 321 residues: Small ribosomal subunit biogenesis GTPase RsgA (321 aa).

Residues 89–248 (QSWINRPPVA…VADTPGFNRP (160 aa)) form the CP-type G domain. Residues 138–141 (TKRD) and 190–198 (GPSGVGKTS) contribute to the GTP site. 4 residues coordinate Zn(2+): cysteine 273, cysteine 278, histidine 280, and cysteine 286.

This sequence belongs to the TRAFAC class YlqF/YawG GTPase family. RsgA subfamily. In terms of assembly, monomer. Associates with 30S ribosomal subunit, binds 16S rRNA. Zn(2+) serves as cofactor.

Its subcellular location is the cytoplasm. Functionally, one of several proteins that assist in the late maturation steps of the functional core of the 30S ribosomal subunit. Helps release RbfA from mature subunits. May play a role in the assembly of ribosomal proteins into the subunit. Circularly permuted GTPase that catalyzes slow GTP hydrolysis, GTPase activity is stimulated by the 30S ribosomal subunit. The polypeptide is Small ribosomal subunit biogenesis GTPase RsgA (Prochlorococcus marinus (strain MIT 9303)).